The sequence spans 212 residues: Thiamine-phosphate synthase (212 aa).

Residues 41-45 (QYREK) and aspartate 76 each bind 4-amino-2-methyl-5-(diphosphooxymethyl)pyrimidine. Mg(2+)-binding residues include aspartate 77 and aspartate 96. Serine 114 contributes to the 4-amino-2-methyl-5-(diphosphooxymethyl)pyrimidine binding site. A 2-[(2R,5Z)-2-carboxy-4-methylthiazol-5(2H)-ylidene]ethyl phosphate-binding site is contributed by 141 to 143 (TTS). 4-amino-2-methyl-5-(diphosphooxymethyl)pyrimidine is bound at residue lysine 144. Residues glycine 172 and 192–193 (IS) contribute to the 2-[(2R,5Z)-2-carboxy-4-methylthiazol-5(2H)-ylidene]ethyl phosphate site.

Belongs to the thiamine-phosphate synthase family. Requires Mg(2+) as cofactor.

It catalyses the reaction 2-[(2R,5Z)-2-carboxy-4-methylthiazol-5(2H)-ylidene]ethyl phosphate + 4-amino-2-methyl-5-(diphosphooxymethyl)pyrimidine + 2 H(+) = thiamine phosphate + CO2 + diphosphate. The catalysed reaction is 2-(2-carboxy-4-methylthiazol-5-yl)ethyl phosphate + 4-amino-2-methyl-5-(diphosphooxymethyl)pyrimidine + 2 H(+) = thiamine phosphate + CO2 + diphosphate. It carries out the reaction 4-methyl-5-(2-phosphooxyethyl)-thiazole + 4-amino-2-methyl-5-(diphosphooxymethyl)pyrimidine + H(+) = thiamine phosphate + diphosphate. It functions in the pathway cofactor biosynthesis; thiamine diphosphate biosynthesis; thiamine phosphate from 4-amino-2-methyl-5-diphosphomethylpyrimidine and 4-methyl-5-(2-phosphoethyl)-thiazole: step 1/1. Condenses 4-methyl-5-(beta-hydroxyethyl)thiazole monophosphate (THZ-P) and 2-methyl-4-amino-5-hydroxymethyl pyrimidine pyrophosphate (HMP-PP) to form thiamine monophosphate (TMP). This is Thiamine-phosphate synthase from Leuconostoc citreum (strain KM20).